A 565-amino-acid chain; its full sequence is Urocanate hydratase (565 aa).

NAD(+) contacts are provided by residues 61-62 (GG), Q139, 185-187 (GMG), E205, R210, 251-252 (NA), 272-276 (QTSAH), 282-283 (YL), and Y331. C419 is an active-site residue. The disordered stretch occupies residues 453–472 (LDSGSVASPNRETESMRDGS). A compositionally biased stretch (basic and acidic residues) spans 463 to 472 (RETESMRDGS). G501 contributes to the NAD(+) binding site.

It belongs to the urocanase family. NAD(+) is required as a cofactor.

The protein localises to the cytoplasm. It carries out the reaction 4-imidazolone-5-propanoate = trans-urocanate + H2O. Its pathway is amino-acid degradation; L-histidine degradation into L-glutamate; N-formimidoyl-L-glutamate from L-histidine: step 2/3. Its function is as follows. Catalyzes the conversion of urocanate to 4-imidazolone-5-propionate. The protein is Urocanate hydratase of Pseudomonas syringae pv. tomato (strain ATCC BAA-871 / DC3000).